Reading from the N-terminus, the 287-residue chain is MKTQDMNRDWISTASTLNKALPYLQRYAGATVVIKLGGHSMGSDEAMDEFARDVVLMRQVGVNPVIVHGGGPMINAMLDKLDIKSEFVNGKRVTDRATMDVVEMVLSGLVNKRIVQAINGQGGCAVGISGKDARLITCCQTDPDLGFVGTPQDVDPRLLRDLTEKEYIPVIAPLGADQTGQTYNINGDTAAGAVAAALKADRLLLLTDVAGVKNDAGDVLTELSAKQIEDMTRDGTIAGGMIPKTETALAALRGGVRAAVILDGRAPNACLLELFTEHGAGSIIRAD.

Substrate contacts are provided by residues 70-71 (GG), Arg-92, and Asn-184.

The protein belongs to the acetylglutamate kinase family. ArgB subfamily.

It is found in the cytoplasm. The catalysed reaction is N-acetyl-L-glutamate + ATP = N-acetyl-L-glutamyl 5-phosphate + ADP. It participates in amino-acid biosynthesis; L-arginine biosynthesis; N(2)-acetyl-L-ornithine from L-glutamate: step 2/4. Functionally, catalyzes the ATP-dependent phosphorylation of N-acetyl-L-glutamate. The polypeptide is Acetylglutamate kinase (Roseobacter denitrificans (strain ATCC 33942 / OCh 114) (Erythrobacter sp. (strain OCh 114))).